A 148-amino-acid polypeptide reads, in one-letter code: MGLEKSLILLPLLVLVFGWVQPSLGKETSAQKFERQHMDSTGSSSSPTYCNQMMKRRNMTQGYCKPVNTFVHKPLANVQAVCSQKNVTCKNGNSNCYKSHSALPITDCRLKGNSKYPNCDYQTNQLQKHIIVACEGSPFVPVHFDASV.

Residues 1 to 25 (MGLEKSLILLPLLVLVFGWVQPSLG) form the signal peptide. Residues Lys32 and Arg35 each contribute to the substrate site. The Proton acceptor role is filled by His37. Intrachain disulfides connect Cys50–Cys108, Cys64–Cys119, Cys82–Cys134, and Cys89–Cys96. Residue Asn58 is glycosylated (N-linked (GlcNAc...) asparagine). 65-69 (KPVNT) provides a ligand contact to substrate. Residue Asn86 is glycosylated (N-linked (GlcNAc...) asparagine). Residues Lys90 and Arg109 each contribute to the substrate site. His143 functions as the Proton donor in the catalytic mechanism.

This sequence belongs to the pancreatic ribonuclease family. As to quaternary structure, monomer. Interacts with and forms tight 1:1 complexes with RNH1. Dimerization of two such complexes may occur. Interaction with RNH1 inhibits this protein. Pancreas.

Its subcellular location is the secreted. The enzyme catalyses an [RNA] containing cytidine + H2O = an [RNA]-3'-cytidine-3'-phosphate + a 5'-hydroxy-ribonucleotide-3'-[RNA].. It carries out the reaction an [RNA] containing uridine + H2O = an [RNA]-3'-uridine-3'-phosphate + a 5'-hydroxy-ribonucleotide-3'-[RNA].. In terms of biological role, endonuclease that catalyzes the cleavage of RNA on the 3' side of pyrimidine nucleotides. Acts on single-stranded and double-stranded RNA. The polypeptide is Ribonuclease pancreatic (RNASE1) (Myodes glareolus (Bank vole)).